The chain runs to 3916 residues: Fusarin C synthetase (3916 aa).

Positions 9 to 440 (KEPIAIIGTS…GTNVHAIIEQ (432 aa)) constitute a Ketosynthase family 3 (KS3) domain. Active-site for beta-ketoacyl synthase activity residues include Cys182, His319, and His360. The tract at residues 548–866 (VFTGQGAQWP…QGTVARNIHD (319 aa)) is malonyl-CoA:ACP transacylase (MAT) domain. Residues 935-1068 (HPLLGARSVE…GQLRVEFGCS (134 aa)) are N-terminal hotdog fold. Positions 935 to 1228 (HPLLGARSVE…GLTCTSLLRP (294 aa)) are dehydratase (DH) domain. A PKS/mFAS DH domain is found at 935–1231 (HPLLGARSVE…CTSLLRPGPS (297 aa)). The active-site Proton acceptor; for dehydratase activity is the His967. The segment at 1084–1231 (LTSVNMERFY…CTSLLRPGPS (148 aa)) is C-terminal hotdog fold. Asp1141 serves as the catalytic Proton donor; for dehydratase activity. The C-methyltransferase (CMeT) domain stretch occupies residues 1347–1575 (IQAVGENLPS…VNDFVDAEKY (229 aa)). A ketoreductase (KR) domain 1 region spans residues 2092–2266 (TYLLIGCTGG…AASVMHIGMV (175 aa)). The Carrier 1 domain occupies 2372–2449 (EILAVVEEEF…ELCSTVVSHL (78 aa)). Ser2409 bears the O-(pantetheine 4'-phosphoryl)serine mark. The segment at 2487–2510 (NEPFTIRNSPNSTQVTSEAGVDED) is disordered. A compositionally biased stretch (polar residues) spans 2492 to 2503 (IRNSPNSTQVTS). The interval 2522 to 2806 (PLSFAQERLW…VNLLPLRLKI (285 aa)) is condensation. The tract at residues 2975–3385 (EFVVKQPDDT…RIAGDSQIKL (411 aa)) is adenylation. The Carrier 2 domain maps to 3493 to 3570 (KPLTETQERL…EMAAKIDGST (78 aa)). Residue Ser3530 is modified to O-(pantetheine 4'-phosphoryl)serine. The tract at residues 3612–3833 (LTGATGFLGV…DFVPVDVVAA (222 aa)) is thiolester reductase (R) domain.

In the C-terminal section; belongs to the NRP synthetase family.

It participates in mycotoxin biosynthesis. In terms of biological role, fusarin C synthetase; part of the gene cluster that mediates the biosynthesis of the mycotoxin fusarin C. Within the cluster, FUS1, FUS2, FUS8 and FUS9 are sufficient for fusarin production. The roles of the other FUS members are yet undetermined. The fusarin C synthetase FUS1 is responsible for the condensation of one acetyl-coenzyme A (CoA) unit with six malonyl-CoA units and the amide linkage of the arising heptaketide and homoserine, subsequently releasing the first intermediate, prefusarin, as an alcohol with an open ring structure. The cytochrome P450 monooxygenase FUS8 participates in multiple oxidation processes at carbon C-20 and is able to use the FUS1 product as substrate, resulting in formation of 20-hydroxy-prefusarin. This reaction seems to be essential before the 2-pyrrolidone ring closure can be catalyzed by FUS2, generating 20-hydroxy-fusarin. FUS8 is able to further oxidizes carbon C-20 after ring closure, resulting in the formation of carboxy-fusarin C. As the last step, FUS9 methylates the hydroxyl group at C-21 to generate fusarin C. Fusarin C can then rearrange to epi-fusarin C, the (z)-isomers, and fusarin A and fusarin D. The sequence is that of Fusarin C synthetase from Gibberella fujikuroi (strain CBS 195.34 / IMI 58289 / NRRL A-6831) (Bakanae and foot rot disease fungus).